The following is a 376-amino-acid chain: Succinyl-diaminopimelate desuccinylase (376 aa).

His66 is a Zn(2+) binding site. Asp68 is a catalytic residue. Asp99 serves as a coordination point for Zn(2+). Glu133 serves as the catalytic Proton acceptor. The Zn(2+) site is built by Glu134, Glu162, and His348.

Belongs to the peptidase M20A family. DapE subfamily. In terms of assembly, homodimer. Zn(2+) is required as a cofactor. Requires Co(2+) as cofactor.

It carries out the reaction N-succinyl-(2S,6S)-2,6-diaminopimelate + H2O = (2S,6S)-2,6-diaminopimelate + succinate. It functions in the pathway amino-acid biosynthesis; L-lysine biosynthesis via DAP pathway; LL-2,6-diaminopimelate from (S)-tetrahydrodipicolinate (succinylase route): step 3/3. Catalyzes the hydrolysis of N-succinyl-L,L-diaminopimelic acid (SDAP), forming succinate and LL-2,6-diaminopimelate (DAP), an intermediate involved in the bacterial biosynthesis of lysine and meso-diaminopimelic acid, an essential component of bacterial cell walls. In Xanthomonas euvesicatoria pv. vesicatoria (strain 85-10) (Xanthomonas campestris pv. vesicatoria), this protein is Succinyl-diaminopimelate desuccinylase.